The sequence spans 67 residues: Toxin Bl-1 (67 aa).

Residues 2 to 66 (RDGYISQPEN…GIIVDGIKCH (65 aa)) form the LCN-type CS-alpha/beta domain. Intrachain disulfides connect Cys12-Cys65, Cys16-Cys37, Cys23-Cys47, and Cys27-Cys49. At Thr67 the chain carries Threonine amide.

Belongs to the long (4 C-C) scorpion toxin superfamily. Sodium channel inhibitor family. Alpha subfamily. In terms of tissue distribution, expressed by the venom gland.

It localises to the secreted. Functionally, alpha toxins bind voltage-independently at site-3 of sodium channels (Nav) and inhibit the inactivation of the activated channels, thereby blocking neuronal transmission. Is highly toxic to insects (tested on the crickets A.domesticus). This peptide may also be toxic to mammals, since it is similar to alpha-like toxins that are active on both insect and mammalian sodium channels. In Buthacus leptochelys (Egyptian fat-tailed scorpion), this protein is Toxin Bl-1.